A 190-amino-acid chain; its full sequence is Prostaglandin-H2 D-isomerase (190 aa).

An N-terminal signal peptide occupies residues 1–22 (MATHHTLWMGLVLLGLLGGLQA). Residue N51 is glycosylated (N-linked (GlcNAc...) asparagine). C65 acts as the Nucleophile in catalysis. An N-linked (GlcNAc...) asparagine glycan is attached at N78. Cysteines 89 and 186 form a disulfide.

It belongs to the calycin superfamily. Lipocalin family. In terms of assembly, monomer.

It is found in the rough endoplasmic reticulum. The protein localises to the nucleus membrane. The protein resides in the golgi apparatus. Its subcellular location is the cytoplasm. It localises to the perinuclear region. It is found in the secreted. It catalyses the reaction prostaglandin H2 = prostaglandin D2. Functionally, catalyzes the conversion of PGH2 to PGD2, a prostaglandin involved in smooth muscle contraction/relaxation and a potent inhibitor of platelet aggregation. Involved in a variety of CNS functions, such as sedation, NREM sleep and PGE2-induced allodynia, and may have an anti-apoptotic role in oligodendrocytes. Binds small non-substrate lipophilic molecules, including biliverdin, bilirubin, retinal, retinoic acid and thyroid hormone, and may act as a scavenger for harmful hydrophobic molecules and as a secretory retinoid and thyroid hormone transporter. Possibly involved in development and maintenance of the blood-brain, blood-retina, blood-aqueous humor and blood-testis barrier. It is likely to play important roles in both maturation and maintenance of the central nervous system and male reproductive system. Involved in PLA2G3-dependent maturation of mast cells. PLA2G3 is secreted by immature mast cells and acts on nearby fibroblasts upstream to PTDGS to synthesize PGD2, which in turn promotes mast cell maturation and degranulation via PTGDR. This is Prostaglandin-H2 D-isomerase (PTGDS) from Macaca fuscata fuscata (Japanese macaque).